Here is a 197-residue protein sequence, read N- to C-terminus: Ribonuclease HII (197 aa).

The RNase H type-2 domain occupies 4 to 197 (IWVCGVDEAG…VRKALESVAS (194 aa)). Residues D10, E11, and D106 each contribute to the a divalent metal cation site.

The protein belongs to the RNase HII family. Mn(2+) serves as cofactor. Mg(2+) is required as a cofactor.

Its subcellular location is the cytoplasm. The enzyme catalyses Endonucleolytic cleavage to 5'-phosphomonoester.. Its function is as follows. Endonuclease that specifically degrades the RNA of RNA-DNA hybrids. The protein is Ribonuclease HII of Polynucleobacter necessarius subsp. necessarius (strain STIR1).